Reading from the N-terminus, the 612-residue chain is DNA mismatch repair protein MutL (612 aa).

This sequence belongs to the DNA mismatch repair MutL/HexB family.

In terms of biological role, this protein is involved in the repair of mismatches in DNA. It is required for dam-dependent methyl-directed DNA mismatch repair. May act as a 'molecular matchmaker', a protein that promotes the formation of a stable complex between two or more DNA-binding proteins in an ATP-dependent manner without itself being part of a final effector complex. The chain is DNA mismatch repair protein MutL from Bartonella quintana (strain Toulouse) (Rochalimaea quintana).